A 190-amino-acid chain; its full sequence is Holliday junction branch migration complex subunit RuvA (190 aa).

Residues 1–65 (MIGNLRGIVD…ENVTQLYGFI (65 aa)) are domain I. A domain II region spans residues 66 to 143 (SKEEQQCLRL…KLEINNNHFH (78 aa)). The tract at residues 144-147 (SISE) is flexible linker. Positions 147–190 (EDALSALINLGYERTKAYDTIKKIEDESPNLDTKDIIRMALKTI) are domain III.

The protein belongs to the RuvA family. Homotetramer. Forms an RuvA(8)-RuvB(12)-Holliday junction (HJ) complex. HJ DNA is sandwiched between 2 RuvA tetramers; dsDNA enters through RuvA and exits via RuvB. An RuvB hexamer assembles on each DNA strand where it exits the tetramer. Each RuvB hexamer is contacted by two RuvA subunits (via domain III) on 2 adjacent RuvB subunits; this complex drives branch migration. In the full resolvosome a probable DNA-RuvA(4)-RuvB(12)-RuvC(2) complex forms which resolves the HJ.

The protein localises to the cytoplasm. Functionally, the RuvA-RuvB-RuvC complex processes Holliday junction (HJ) DNA during genetic recombination and DNA repair, while the RuvA-RuvB complex plays an important role in the rescue of blocked DNA replication forks via replication fork reversal (RFR). RuvA specifically binds to HJ cruciform DNA, conferring on it an open structure. The RuvB hexamer acts as an ATP-dependent pump, pulling dsDNA into and through the RuvAB complex. HJ branch migration allows RuvC to scan DNA until it finds its consensus sequence, where it cleaves and resolves the cruciform DNA. In Wolbachia pipientis subsp. Culex pipiens (strain wPip), this protein is Holliday junction branch migration complex subunit RuvA.